The following is a 308-amino-acid chain: D-alanine--D-alanine ligase (308 aa).

The ATP-grasp domain maps to 105 to 302; that stretch reads KAIFKALGLD…FPELCERILD (198 aa). 133-188 contributes to the ATP binding site; it reads DLPFGVPCVVKPAGEGSSVGVQIVKDAARLADACREAARYKGDVVVERYVKGTEVN. Positions 256, 269, and 271 each coordinate Mg(2+).

It belongs to the D-alanine--D-alanine ligase family. It depends on Mg(2+) as a cofactor. Requires Mn(2+) as cofactor.

It is found in the cytoplasm. The enzyme catalyses 2 D-alanine + ATP = D-alanyl-D-alanine + ADP + phosphate + H(+). It functions in the pathway cell wall biogenesis; peptidoglycan biosynthesis. In terms of biological role, cell wall formation. This chain is D-alanine--D-alanine ligase, found in Anaeromyxobacter sp. (strain Fw109-5).